We begin with the raw amino-acid sequence, 503 residues long: Maturase K (503 aa).

The protein belongs to the intron maturase 2 family. MatK subfamily.

It is found in the plastid. It localises to the chloroplast. In terms of biological role, usually encoded in the trnK tRNA gene intron. Probably assists in splicing its own and other chloroplast group II introns. In Vicia faba (Broad bean), this protein is Maturase K.